Consider the following 537-residue polypeptide: Glucan 1,6-alpha-glucosidase (537 aa).

D194 acts as the Nucleophile in catalysis. The active-site Proton donor is E236.

It belongs to the glycosyl hydrolase 13 family.

The protein resides in the cytoplasm. It carries out the reaction Hydrolysis of (1-&gt;6)-alpha-D-glucosidic linkages in (1-&gt;6)-alpha-D-glucans and derived oligosaccharides.. In terms of biological role, the physiological substrates may be short isomaltosaccharides. The polypeptide is Glucan 1,6-alpha-glucosidase (dexB) (Streptococcus dysgalactiae subsp. equisimilis (Streptococcus equisimilis)).